Reading from the N-terminus, the 1174-residue chain is PR domain zinc finger protein 15 (1174 aa).

Residues 75–185 (SNLEIRRLDD…AGTELRVWYA (111 aa)) form the SET domain. The tract at residues 252 to 307 (LPAGGQQHEAASEKEPDAPRMEPPTAAESKSIQSVMVTKEPKKKPRRGRKPKASKV) is disordered. A compositionally biased stretch (basic and acidic residues) spans 261–271 (AASEKEPDAPR). Over residues 292 to 304 (PKKKPRRGRKPKA) the composition is skewed to basic residues. 2 C2H2-type zinc fingers span residues 402–424 (HQCG…VRSH) and 434–457 (FKCE…SYKH). The C2H2-type 3; degenerate zinc finger occupies 468–486 (YRCGSCGKTFRMESALEFH). 2 consecutive C2H2-type zinc fingers follow at residues 495–517 (FQCE…KKKH) and 522–544 (FACE…QRRH). Residue Lys552 forms a Glycyl lysine isopeptide (Lys-Gly) (interchain with G-Cter in SUMO2) linkage. 2 consecutive C2H2-type zinc fingers follow at residues 571–593 (SGCP…LLTH) and 598–620 (YTCE…IHVH). Positions 639-658 (IGISSEENDDNSDESADSEP) are disordered. The span at 644-655 (EENDDNSDESAD) shows a compositional bias: acidic residues. C2H2-type zinc fingers lie at residues 661–684 (YSCK…MEVH), 689–711 (HGCS…MVIH), 725–747 (HPCE…KLIH), 753–775 (HACE…MRVH), 781–803 (YLCA…MKLH), 809–831 (YECK…YKRH), 837–859 (FMCE…KLIH), and 865–888 (WTCS…QLTH). 2 disordered regions span residues 957 to 1007 (AEGK…GDET) and 1147 to 1174 (LQPP…MYSY). Basic residues predominate over residues 962-973 (GKAAKRSHKRKQ). Residues 1154-1174 (AAPQQAVQPQVQNEQQQMYSY) show a composition bias toward low complexity.

In terms of tissue distribution, expressed in embryonic stem cells (ESCs) (at protein level).

The protein localises to the nucleus. In terms of biological role, sequence-specific DNA-binding transcriptional regulator. Plays a role as a molecular node in a transcriptional network regulating embryonic development and cell fate decision. Stimulates the expression of upstream key transcriptional activators and repressors of the Wnt/beta-catenin and MAPK/ERK pathways, respectively, that are essential for naive pluripotency and self-renewal maintenance of embryonic stem cells (ESCs). Specifically promotes SPRY1 and RSPO1 transcription activation through recognition and direct binding of a specific DNA sequence in their promoter regions. Also plays a role in induced pluripotent stem cells (iPSCs) reprogramming. Involved in early embryo development. The chain is PR domain zinc finger protein 15 from Mus musculus (Mouse).